Consider the following 445-residue polypeptide: tRNA modification GTPase MnmE (445 aa).

(6S)-5-formyl-5,6,7,8-tetrahydrofolate-binding residues include R20, E79, and K119. One can recognise a TrmE-type G domain in the interval 215–371; that stretch reads GLKLAIIGPP…ILKNIENIAE (157 aa). Position 225 (N225) interacts with K(+). GTP-binding positions include 225-230, 244-250, and 269-272; these read NVGKSS, SNIAGTT, and DTAG. S229 is a Mg(2+) binding site. Residues S244, I246, and T249 each coordinate K(+). Mg(2+) is bound at residue T250. K445 provides a ligand contact to (6S)-5-formyl-5,6,7,8-tetrahydrofolate.

Belongs to the TRAFAC class TrmE-Era-EngA-EngB-Septin-like GTPase superfamily. TrmE GTPase family. Homodimer. Heterotetramer of two MnmE and two MnmG subunits. The cofactor is K(+).

Its subcellular location is the cytoplasm. In terms of biological role, exhibits a very high intrinsic GTPase hydrolysis rate. Involved in the addition of a carboxymethylaminomethyl (cmnm) group at the wobble position (U34) of certain tRNAs, forming tRNA-cmnm(5)s(2)U34. In Rickettsia conorii (strain ATCC VR-613 / Malish 7), this protein is tRNA modification GTPase MnmE.